The sequence spans 166 residues: Ribosome maturation factor RimP (166 aa).

It belongs to the RimP family.

The protein localises to the cytoplasm. Its function is as follows. Required for maturation of 30S ribosomal subunits. This chain is Ribosome maturation factor RimP, found in Psychrobacter cryohalolentis (strain ATCC BAA-1226 / DSM 17306 / VKM B-2378 / K5).